The following is a 108-amino-acid chain: UPF0060 membrane protein Ent638_1931 (108 aa).

A run of 4 helical transmembrane segments spans residues 6 to 26 (LLFF…WLWL), 29 to 49 (GASV…VWLL), 61 to 81 (AAYG…VDGV), and 85 to 105 (AYDW…VAGW).

Belongs to the UPF0060 family.

The protein resides in the cell inner membrane. The polypeptide is UPF0060 membrane protein Ent638_1931 (Enterobacter sp. (strain 638)).